Here is a 397-residue protein sequence, read N- to C-terminus: Penicillopepsin-1 (397 aa).

An N-terminal signal peptide occupies residues 1–20 (MVVFSQVTVALTCFSAIASA). The propeptide at 21 to 71 (AAVRQEPPQGFTVNQVQKAVPGTRTVNLPGLYANALVKYGATVPATVHAAA) is activation peptide. Residues 87–394 (YLTPVTIGSS…DSEGPRLGFA (308 aa)) enclose the Peptidase A1 domain. Active-site residues include D103 and D285. The N-linked (GlcNAc...) asparagine glycan is linked to N311. A disulfide bond links C322 and C357.

The protein belongs to the peptidase A1 family. In terms of assembly, monomer.

It localises to the secreted. It catalyses the reaction Hydrolysis of proteins with broad specificity similar to that of pepsin A, preferring hydrophobic residues at P1 and P1', but also cleaving 20-Gly-|-Glu-21 in the B chain of insulin. Clots milk, and activates trypsinogen.. Functionally, secreted aspartic endopeptidase that allows assimilation of proteinaceous substrates. The scissile peptide bond is attacked by a nucleophilic water molecule activated by two aspartic residues in the active site. Shows a broad primary substrate specificity. Favors hydrophobic residues at the P1 and P1' positions, but can also activate trypsinogen and hydrolyze the B chain of insulin between positions 'Gly-20' and 'Glu-21'. In Penicillium roqueforti, this protein is Penicillopepsin-1.